The chain runs to 307 residues: Olfactory receptor 8K5 (307 aa).

Over 1 to 25 (MGQHNLTVLTEFILMELTRRPELQI) the chain is Extracellular. The N-linked (GlcNAc...) asparagine glycan is linked to N5. Residues 26–46 (PLFGVFLVIYLITVVGNLTMI) form a helical membrane-spanning segment. The Cytoplasmic portion of the chain corresponds to 47-54 (ILTKLDSH). Residues 55-75 (LHTPMYFSIRHLAFVDLGNST) form a helical membrane-spanning segment. Residues 76 to 99 (VICPKVLANFVVDRNTISYYACAA) lie on the Extracellular side of the membrane. A disulfide bridge connects residues C97 and C189. Residues 100–120 (QLAFFLMFIISEFFILSAMAY) form a helical membrane-spanning segment. Topologically, residues 121–139 (DRYVAICNPLLYYVIMSQR) are cytoplasmic. A helical transmembrane segment spans residues 140 to 160 (LCHVLVGIQYLYSTFQALMFT). Residues 161–197 (IKIFTLTFCGSNVISHFYCDDVPLLPMLCSNAQEIEL) are Extracellular-facing. The helical transmembrane segment at 198-217 (LSILFSVFNLISSFLIVLVS) threads the bilayer. The Cytoplasmic portion of the chain corresponds to 218–237 (YMLILLAICQMHSAEGRKKA). Residues 238–258 (FSTCGSHLTVVVVFYGSLLFM) traverse the membrane as a helical segment. At 259–271 (YMQPNSTHFFDTD) the chain is on the extracellular side. An N-linked (GlcNAc...) asparagine glycan is attached at N263. The helical transmembrane segment at 272 to 292 (KMASVFYTLVIPMLNPLIYSL) threads the bilayer. The Cytoplasmic portion of the chain corresponds to 293-307 (RNEEVKNAFYKLFEN).

The protein belongs to the G-protein coupled receptor 1 family.

Its subcellular location is the cell membrane. Its function is as follows. Odorant receptor. The chain is Olfactory receptor 8K5 (OR8K5) from Homo sapiens (Human).